A 180-amino-acid polypeptide reads, in one-letter code: Large ribosomal subunit protein uL5 (180 aa).

The protein belongs to the universal ribosomal protein uL5 family. In terms of assembly, part of the 50S ribosomal subunit; part of the 5S rRNA/L5/L18/L25 subcomplex. Contacts the 5S rRNA and the P site tRNA. Forms a bridge to the 30S subunit in the 70S ribosome.

In terms of biological role, this is one of the proteins that bind and probably mediate the attachment of the 5S RNA into the large ribosomal subunit, where it forms part of the central protuberance. In the 70S ribosome it contacts protein S13 of the 30S subunit (bridge B1b), connecting the 2 subunits; this bridge is implicated in subunit movement. Contacts the P site tRNA; the 5S rRNA and some of its associated proteins might help stabilize positioning of ribosome-bound tRNAs. This chain is Large ribosomal subunit protein uL5, found in Limosilactobacillus reuteri (strain DSM 20016) (Lactobacillus reuteri).